Consider the following 535-residue polypeptide: Unconventional prefoldin RPB5 interactor 1 (535 aa).

Residue methionine 1 is modified to N-acetylmethionine. Disordered stretches follow at residues 1-23 (MEAPTVETPPDPSPPSAPAPALV), 223-330 (LLGE…VGDN), 352-383 (KNTTLKFSEKKEEAKRKRKNSTGSGHSAQELP), and 412-431 (SRSRENSVCSDTSESSAAEF). A compositionally biased stretch (pro residues) spans 7-18 (ETPPDPSPPSAP). Composition is skewed to polar residues over residues 253–265 (TNVNAMHQVTDSH) and 276–296 (EPFSGQVNSQLNCSVNGSSSY). The segment covering 299 to 320 (DDDDDDDDDDDDDNIDDDDGDN) has biased composition (acidic residues). Position 372 is a phosphoserine; by RPS6KB1 (serine 372). Threonine 373 carries the post-translational modification Phosphothreonine. Residues 417–427 (NSVCSDTSESS) show a composition bias toward polar residues. Position 442 is a phosphoserine (serine 442).

Belongs to the RNA polymerase II subunit 5-mediating protein family. Homodimer. Component of the PAQosome complex which is responsible for the biogenesis of several protein complexes and which consists of R2TP complex members RUVBL1, RUVBL2, RPAP3 and PIH1D1, URI complex members PFDN2, PFDN6, PDRG1, UXT and URI1 as well as ASDURF, POLR2E and DNAAF10/WDR92. Interacts with POLR2E/RPB5, RUVBL2 and RUVBL1. Interacts with PFDN2, PFDN4 and STAP1; the interactions are phosphorylation-dependent and occur in a growth-dependent manner in the mitochondrion. Interacts with UXT. Interacts with PPP1CC; the interaction is phosphorylation-dependent and occurs in a growth factor-dependent manner. Interacts (via the middle C-terminal region) with GTF2F1 and GTF2F2. Interacts with DMAP1. Interacts with TSC1 and TSC2. Interacts with PRPF8 and EFTUD2 in a ZNHIT2-dependent manner. Post-translationally, phosphorylated. Phosphorylation occurs essentially on serine residues. Phosphorylation occurs in response to androgen treatment in prostate cancer cells in a mTOR-dependent manner. Phosphorylated; hyperhosphorylated in mitochondria in a mTORC-dependent signaling pathway. Phosphorylated at Ser-372 by RPS6KB1 in a growth factor- and rapamycin-dependent manner. S6K1-mediated mitochondrial phosphorylation at Ser-372 disrupts the URI1-PPP1CC complex in the mitochondrion, relieves PPP1CC phosphatase inhibition activity and hence engages a negative feedback diminishing RPS6KB1 kinase activity, preventing sustained S6K1-dependent signaling. Ubiquitous. Expressed in ovarian cancers (at protein level). Expressed strongly in skeletal muscle. Expressed weakly in brain, heart, pancreas and in prostate epithelial cells.

It localises to the nucleus. The protein resides in the cytoplasm. Its subcellular location is the mitochondrion. The protein localises to the cell projection. It is found in the dendrite. In terms of biological role, involved in gene transcription regulation. Acts as a transcriptional repressor in concert with the corepressor UXT to regulate androgen receptor (AR) transcription. May act as a tumor suppressor to repress AR-mediated gene transcription and to inhibit anchorage-independent growth in prostate cancer cells. Required for cell survival in ovarian cancer cells. Together with UXT, associates with chromatin to the NKX3-1 promoter region. Antagonizes transcriptional modulation via hepatitis B virus X protein. Plays a central role in maintaining S6K1 signaling and BAD phosphorylation under normal growth conditions thereby protecting cells from potential deleterious effects of sustained S6K1 signaling. The URI1-PPP1CC complex acts as a central component of a negative feedback mechanism that counteracts excessive S6K1 survival signaling to BAD in response to growth factors. Mediates inhibition of PPP1CC phosphatase activity in mitochondria. Coordinates the regulation of nutrient-sensitive gene expression availability in a mTOR-dependent manner. Seems to be a scaffolding protein able to assemble a prefoldin-like complex that contains PFDs and proteins with roles in transcription and ubiquitination. This Homo sapiens (Human) protein is Unconventional prefoldin RPB5 interactor 1 (URI1).